The following is a 38-amino-acid chain: Photosystem II reaction center protein L (38 aa).

A helical membrane pass occupies residues 17-37 (SLYWGLLLIFVLAVLFSSYFF).

It belongs to the PsbL family. In terms of assembly, PSII is composed of 1 copy each of membrane proteins PsbA, PsbB, PsbC, PsbD, PsbE, PsbF, PsbH, PsbI, PsbJ, PsbK, PsbL, PsbM, PsbT, PsbX, PsbY, PsbZ, Psb30/Ycf12, at least 3 peripheral proteins of the oxygen-evolving complex and a large number of cofactors. It forms dimeric complexes.

Its subcellular location is the plastid. It localises to the chloroplast thylakoid membrane. Functionally, one of the components of the core complex of photosystem II (PSII). PSII is a light-driven water:plastoquinone oxidoreductase that uses light energy to abstract electrons from H(2)O, generating O(2) and a proton gradient subsequently used for ATP formation. It consists of a core antenna complex that captures photons, and an electron transfer chain that converts photonic excitation into a charge separation. This subunit is found at the monomer-monomer interface and is required for correct PSII assembly and/or dimerization. The chain is Photosystem II reaction center protein L from Ephedra sinica (Chinese ephedra).